The chain runs to 145 residues: 3-hydroxyacyl-[acyl-carrier-protein] dehydratase FabZ (145 aa).

His49 is an active-site residue.

It belongs to the thioester dehydratase family. FabZ subfamily.

Its subcellular location is the cytoplasm. It carries out the reaction a (3R)-hydroxyacyl-[ACP] = a (2E)-enoyl-[ACP] + H2O. In terms of biological role, involved in unsaturated fatty acids biosynthesis. Catalyzes the dehydration of short chain beta-hydroxyacyl-ACPs and long chain saturated and unsaturated beta-hydroxyacyl-ACPs. This chain is 3-hydroxyacyl-[acyl-carrier-protein] dehydratase FabZ, found in Rickettsia africae (strain ESF-5).